The chain runs to 386 residues: IgA receptor (386 aa).

A signal peptide spans 1-41 (MARKDTNKQYSLRKLKTGTASVAVAVAVLGAGFANQTEVKA). Residues 42 to 152 (AEIKKPQADS…QKKHQQEQQQ (111 aa)) are igA-binding. 7 stretches are compositionally biased toward basic and acidic residues: residues 79–88 (YADDKEKDPQ), 97–128 (QDLR…EQLE), 134–166 (EADK…DKQI), 174–201 (LSRD…EKQI), 209–221 (LSRD…EAKK), 233–243 (EHQKLKEDKQI), and 251–267 (LSRD…KVEA). Disordered regions lie at residues 79–221 (YADD…EAKK) and 233–268 (EHQK…VEAD). 3 C repeats span residues 158-192 (QKLA…EAEH), 193-227 (QKLK…EADL), and 235-269 (QKLK…EADL). 4 D repeats span residues 302–307 (ARLEAE), 308–313 (AKALKE), 316–321 (AKQAEE), and 323–328 (AKLKGN). Positions 323-360 (AKLKGNQTPNAKVAPQANRSRSAMTQQKRTLPSTGETA) are disordered. Polar residues predominate over residues 339–359 (ANRSRSAMTQQKRTLPSTGET). Residues 353 to 357 (LPSTG) carry the LPXTG sorting signal motif. T356 carries the pentaglycyl murein peptidoglycan amidated threonine modification. Positions 357–386 (GETANPFFTAAAATVMVSAGMLALKRKEEN) are cleaved as a propeptide — removed by sortase.

This sequence belongs to the M protein family.

Its subcellular location is the secreted. It localises to the cell wall. Binds IgA of both subclasses, and also binds polyclonal IgG weakly. The protein is IgA receptor (arp4) of Streptococcus pyogenes.